The primary structure comprises 261 residues: uncharacterized protein (261 aa).

41–48 (GKSGSGKS) lines the ATP pocket.

This sequence belongs to the IIV-6 075L family.

This is an uncharacterized protein from Invertebrate iridescent virus 3 (IIV-3).